The following is a 477-amino-acid chain: UDP-N-acetylmuramate--L-alanine ligase (477 aa).

Position 115 to 121 (115 to 121 (GTHGKTT)) interacts with ATP.

This sequence belongs to the MurCDEF family.

The protein localises to the cytoplasm. The catalysed reaction is UDP-N-acetyl-alpha-D-muramate + L-alanine + ATP = UDP-N-acetyl-alpha-D-muramoyl-L-alanine + ADP + phosphate + H(+). It participates in cell wall biogenesis; peptidoglycan biosynthesis. In terms of biological role, cell wall formation. The sequence is that of UDP-N-acetylmuramate--L-alanine ligase from Gluconobacter oxydans (strain 621H) (Gluconobacter suboxydans).